A 506-amino-acid polypeptide reads, in one-letter code: Cytochrome P450 71B8 (506 aa).

Residues 5–25 (ILLCFFFLFPLLLTLFKKLLP) traverse the membrane as a helical segment. Residue Cys443 participates in heme binding.

The protein belongs to the cytochrome P450 family. The cofactor is heme.

The protein localises to the membrane. The sequence is that of Cytochrome P450 71B8 (CYP71B8) from Arabidopsis thaliana (Mouse-ear cress).